Reading from the N-terminus, the 290-residue chain is Elongation factor Ts (290 aa).

The involved in Mg(2+) ion dislocation from EF-Tu stretch occupies residues 87–90; that stretch reads TDFV.

This sequence belongs to the EF-Ts family.

It is found in the cytoplasm. Functionally, associates with the EF-Tu.GDP complex and induces the exchange of GDP to GTP. It remains bound to the aminoacyl-tRNA.EF-Tu.GTP complex up to the GTP hydrolysis stage on the ribosome. The sequence is that of Elongation factor Ts (tsf) from Treponema pallidum (strain Nichols).